The primary structure comprises 120 residues: UPF0091 protein PH1455 (120 aa).

The protein belongs to the UPF0091 family.

This is UPF0091 protein PH1455 from Pyrococcus horikoshii (strain ATCC 700860 / DSM 12428 / JCM 9974 / NBRC 100139 / OT-3).